Reading from the N-terminus, the 154-residue chain is Myoglobin (154 aa).

The 147-residue stretch at 2–148 (GLSDGEWQLV…FRNDIAAKYK (147 aa)) folds into the Globin domain. The residue at position 4 (Ser4) is a Phosphoserine. His65 lines the nitrite pocket. Residue His65 participates in O2 binding. A phosphothreonine mark is found at Thr68 and Thr75. His94 is a binding site for heme b. Phosphoserine is present on Ser121.

This sequence belongs to the globin family. In terms of assembly, monomeric.

Its subcellular location is the cytoplasm. It localises to the sarcoplasm. The enzyme catalyses Fe(III)-heme b-[protein] + nitric oxide + H2O = Fe(II)-heme b-[protein] + nitrite + 2 H(+). The catalysed reaction is H2O2 + AH2 = A + 2 H2O. Its function is as follows. Monomeric heme protein which primary function is to store oxygen and facilitate its diffusion within muscle tissues. Reversibly binds oxygen through a pentacoordinated heme iron and enables its timely and efficient release as needed during periods of heightened demand. Depending on the oxidative conditions of tissues and cells, and in addition to its ability to bind oxygen, it also has a nitrite reductase activity whereby it regulates the production of bioactive nitric oxide. Under stress conditions, like hypoxia and anoxia, it also protects cells against reactive oxygen species thanks to its pseudoperoxidase activity. The polypeptide is Myoglobin (Mus musculus (Mouse)).